Reading from the N-terminus, the 299-residue chain is ATP phosphoribosyltransferase (299 aa).

The protein belongs to the ATP phosphoribosyltransferase family. Long subfamily. Equilibrium between an active dimeric form, an inactive hexameric form and higher aggregates. Interconversion between the various forms is largely reversible and is influenced by the natural substrates and inhibitors of the enzyme. It depends on Mg(2+) as a cofactor.

The protein localises to the cytoplasm. The catalysed reaction is 1-(5-phospho-beta-D-ribosyl)-ATP + diphosphate = 5-phospho-alpha-D-ribose 1-diphosphate + ATP. It participates in amino-acid biosynthesis; L-histidine biosynthesis; L-histidine from 5-phospho-alpha-D-ribose 1-diphosphate: step 1/9. Its activity is regulated as follows. Feedback inhibited by histidine. Functionally, catalyzes the condensation of ATP and 5-phosphoribose 1-diphosphate to form N'-(5'-phosphoribosyl)-ATP (PR-ATP). Has a crucial role in the pathway because the rate of histidine biosynthesis seems to be controlled primarily by regulation of HisG enzymatic activity. In Serratia proteamaculans (strain 568), this protein is ATP phosphoribosyltransferase.